The sequence spans 65 residues: Photosystem II reaction center protein Z (65 aa).

2 consecutive transmembrane segments (helical) span residues 11–31 (LVLALIIFSFILVLTLPVIFA) and 44–64 (WLACRFWFFLVFLIGILDGIF).

This sequence belongs to the PsbZ family. In terms of assembly, PSII is composed of 1 copy each of membrane proteins PsbA, PsbB, PsbC, PsbD, PsbE, PsbF, PsbH, PsbI, PsbJ, PsbK, PsbL, PsbM, PsbT, PsbY, PsbZ, Psb30/Ycf12, at least 3 peripheral proteins of the oxygen-evolving complex and a large number of cofactors. It forms dimeric complexes.

It localises to the plastid. The protein localises to the chloroplast thylakoid membrane. Functionally, may control the interaction of photosystem II (PSII) cores with the light-harvesting antenna, regulates electron flow through the 2 photosystem reaction centers. PSII is a light-driven water plastoquinone oxidoreductase, using light energy to abstract electrons from H(2)O, generating a proton gradient subsequently used for ATP formation. The chain is Photosystem II reaction center protein Z from Euglena gracilis.